Reading from the N-terminus, the 492-residue chain is GDP-Man:Man(3)GlcNAc(2)-PP-Dol alpha-1,2-mannosyltransferase (492 aa).

At 1-19 (MAAGERSWCLCKLLRFFYS) the chain is on the lumenal side. The helical transmembrane segment at 20 to 40 (LFFPGLIVCGTLCVCLVIVLW) threads the bilayer. At 41–233 (GIRLLLQRKK…TRNPFLSKVK (193 aa)) the chain is on the cytoplasmic side. The helical intramembrane region spans 234–254 (LIYYYLFAFIYGLVGSCSDVV). Over 255–399 (MVNSSWTLNH…IGLHTMWNEH (145 aa)) the chain is Cytoplasmic. An intramembrane region (helical) is located at residues 400-420 (FGIGVVECMAAGTIILAHNSG). At 421-492 (GPKLDIVVPH…FLSSVEKLFK (72 aa)) the chain is on the cytoplasmic side.

This sequence belongs to the glycosyltransferase group 1 family. Glycosyltransferase 4 subfamily.

The protein resides in the endoplasmic reticulum membrane. The catalysed reaction is an alpha-D-Man-(1-&gt;3)-[alpha-D-Man-(1-&gt;6)]-beta-D-Man-(1-&gt;4)-beta-D-GlcNAc-(1-&gt;4)-alpha-D-GlcNAc-diphospho-di-trans,poly-cis-dolichol + 2 GDP-alpha-D-mannose = an alpha-D-Man-(1-&gt;2)-alpha-D-Man-(1-&gt;2)-alpha-D-Man-(1-&gt;3)-[alpha-D-Man-(1-&gt;6)]-beta-D-Man-(1-&gt;4)-beta-D-GlcNAc-(1-&gt;4)-alpha-D-GlcNAc-diphospho-di-trans,poly-cis-dolichol + 2 GDP + 2 H(+). Its pathway is protein modification; protein glycosylation. GDP-Man:Man(3)GlcNAc(2)-PP-Dol alpha-1,2-mannosyltransferase that operates in the biosynthetic pathway of dolichol-linked oligosaccharides, the glycan precursors employed in protein asparagine (N)-glycosylation. The assembly of dolichol-linked oligosaccharides begins on the cytosolic side of the endoplasmic reticulum membrane and finishes in its lumen. The sequential addition of sugars to dolichol pyrophosphate produces dolichol-linked oligosaccharides containing fourteen sugars, including two GlcNAcs, nine mannoses and three glucoses. Once assembled, the oligosaccharide is transferred from the lipid to nascent proteins by oligosaccharyltransferases. Catalyzes, on the cytoplasmic face of the endoplasmic reticulum, the addition of the fourth and fifth mannose residues to the dolichol-linked oligosaccharide chain, to produce Man(5)GlcNAc(2)-PP-dolichol core oligosaccharide. Man(5)GlcNAc(2)-PP-dolichol is a substrate for ALG3, the following enzyme in the biosynthetic pathway. The protein is GDP-Man:Man(3)GlcNAc(2)-PP-Dol alpha-1,2-mannosyltransferase of Homo sapiens (Human).